A 101-amino-acid polypeptide reads, in one-letter code: MAKQSMKARDVKRVKLAEKFYTKRVELKKIISDVNASDEDRWDAVLKLQTLPRDSSPSRQRNRCRQTGRPHGVLRKFGLSRIKVREAAMRGEIPGLKKASW.

Belongs to the universal ribosomal protein uS14 family. Part of the 30S ribosomal subunit. Contacts proteins S3 and S10.

Binds 16S rRNA, required for the assembly of 30S particles and may also be responsible for determining the conformation of the 16S rRNA at the A site. The chain is Small ribosomal subunit protein uS14 from Haemophilus influenzae (strain PittGG).